The sequence spans 643 residues: 1-deoxy-D-xylulose-5-phosphate synthase (643 aa).

Residues H78 and 119–121 (AHS) each bind thiamine diphosphate. Residue D150 participates in Mg(2+) binding. Thiamine diphosphate-binding positions include 151–152 (GS), N179, Y288, and E370. Residue N179 participates in Mg(2+) binding.

It belongs to the transketolase family. DXPS subfamily. As to quaternary structure, homodimer. The cofactor is Mg(2+). Thiamine diphosphate serves as cofactor.

It catalyses the reaction D-glyceraldehyde 3-phosphate + pyruvate + H(+) = 1-deoxy-D-xylulose 5-phosphate + CO2. It participates in metabolic intermediate biosynthesis; 1-deoxy-D-xylulose 5-phosphate biosynthesis; 1-deoxy-D-xylulose 5-phosphate from D-glyceraldehyde 3-phosphate and pyruvate: step 1/1. Its function is as follows. Catalyzes the acyloin condensation reaction between C atoms 2 and 3 of pyruvate and glyceraldehyde 3-phosphate to yield 1-deoxy-D-xylulose-5-phosphate (DXP). The chain is 1-deoxy-D-xylulose-5-phosphate synthase from Brucella ovis (strain ATCC 25840 / 63/290 / NCTC 10512).